Consider the following 112-residue polypeptide: Nucleoid-associated protein CA_C0126 (112 aa).

The span at 93–102 (EEETSGEMKK) shows a compositional bias: basic and acidic residues. The disordered stretch occupies residues 93-112 (EEETSGEMKKLTGGLNIPGL).

This sequence belongs to the YbaB/EbfC family. In terms of assembly, homodimer.

It localises to the cytoplasm. It is found in the nucleoid. In terms of biological role, binds to DNA and alters its conformation. May be involved in regulation of gene expression, nucleoid organization and DNA protection. This is Nucleoid-associated protein CA_C0126 from Clostridium acetobutylicum (strain ATCC 824 / DSM 792 / JCM 1419 / IAM 19013 / LMG 5710 / NBRC 13948 / NRRL B-527 / VKM B-1787 / 2291 / W).